The following is a 310-amino-acid chain: Tryptophan 2,3-dioxygenase (310 aa).

Residues 1–39 are disordered; sequence MQPPGNDAPAGCPFSGARAQGTQAAHEAPHVPGDAGEQA. Substrate is bound by residues 79-83, tyrosine 141, and arginine 145; that span reads FIIQH. Histidine 268 contributes to the heme binding site. Threonine 282 is a substrate binding site.

The protein belongs to the tryptophan 2,3-dioxygenase family. Homotetramer. The cofactor is heme.

It carries out the reaction L-tryptophan + O2 = N-formyl-L-kynurenine. Its pathway is amino-acid degradation; L-tryptophan degradation via kynurenine pathway; L-kynurenine from L-tryptophan: step 1/2. Functionally, heme-dependent dioxygenase that catalyzes the oxidative cleavage of the L-tryptophan (L-Trp) pyrrole ring and converts L-tryptophan to N-formyl-L-kynurenine. Catalyzes the oxidative cleavage of the indole moiety. The chain is Tryptophan 2,3-dioxygenase from Burkholderia multivorans (strain ATCC 17616 / 249).